We begin with the raw amino-acid sequence, 540 residues long: Putative cysteine ligase BshC (540 aa).

Residues 455–491 (GKENLKRLIRVVNSFEEKVKQRHRKNNQVAIQQLQKI) adopt a coiled-coil conformation.

It belongs to the BshC family.

Involved in bacillithiol (BSH) biosynthesis. May catalyze the last step of the pathway, the addition of cysteine to glucosamine malate (GlcN-Mal) to generate BSH. This chain is Putative cysteine ligase BshC, found in Desulforamulus reducens (strain ATCC BAA-1160 / DSM 100696 / MI-1) (Desulfotomaculum reducens).